Reading from the N-terminus, the 171-residue chain is uncharacterized protein (171 aa).

Disordered regions lie at residues 1-50 (MSHR…THLS) and 71-91 (RIDKDAPKHPYNRRGQQPMMK).

This is an uncharacterized protein from Caenorhabditis elegans.